A 419-amino-acid polypeptide reads, in one-letter code: Endochitinase 2 (419 aa).

The N-terminal stretch at 1 to 18 is a signal peptide; it reads MHHLRALVGVGLAGLAAG. Residues 35–343 enclose the GH18 domain; that stretch reads AQNVVYWGQN…QQAKSILVNG (309 aa). Residue asparagine 153 is glycosylated (N-linked (GlcNAc...) asparagine). The Proton donor role is filled by glutamate 173. N-linked (GlcNAc...) asparagine glycans are attached at residues asparagine 237 and asparagine 256. Residues 343–390 form a disordered region; it reads GAPCPSSGPPSSTPATAPAPTATTMPSSTSVSSPTASPTGGTVPQWGQ. Residues 355-384 are compositionally biased toward low complexity; sequence TPATAPAPTATTMPSSTSVSSPTASPTGGT. The 37-residue stretch at 383–419 folds into the CBM1 domain; it reads GTVPQWGQCGGEGYSGPTQCVPPYQCVKQGDWWSSCR.

The protein belongs to the glycosyl hydrolase 18 family. Chitinase class III subfamily.

It is found in the secreted. The enzyme catalyses Random endo-hydrolysis of N-acetyl-beta-D-glucosaminide (1-&gt;4)-beta-linkages in chitin and chitodextrins.. Functionally, secreted chitinase involved in the degradation of chitin, a component of the cell walls of fungi and exoskeletal elements of some animals (including worms and arthropods). Participates in the infection process and directly acts in the penetration process of the host cuticle. The chain is Endochitinase 2 (chi2) from Metarhizium anisopliae (Entomophthora anisopliae).